The chain runs to 322 residues: Serine protease 38 (322 aa).

The first 28 residues, 1-28 (MAALTSGLGVLGYLLFPLLLASPTWVTS), serve as a signal peptide directing secretion. Residues 29–55 (VSRRHPKSQANSLSGDVACGQPVLQGK) constitute a propeptide, activation peptide. The Peptidase S1 domain occupies 56 to 289 (LLGGEFARDR…FLSWIRYHLQ (234 aa)). Cys-81 and Cys-97 are disulfide-bonded. Active-site charge relay system residues include His-96 and Asp-146. N-linked (GlcNAc...) asparagine glycosylation occurs at Asn-176. 3 disulfides stabilise this stretch: Cys-179-Cys-247, Cys-210-Cys-226, and Cys-237-Cys-265. The active-site Charge relay system is Ser-241. N-linked (GlcNAc...) asparagine glycans are attached at residues Asn-250 and Asn-276.

This sequence belongs to the peptidase S1 family.

The protein localises to the secreted. The polypeptide is Serine protease 38 (Prss38) (Mus musculus (Mouse)).